Consider the following 387-residue polypeptide: Pepsin-3 (387 aa).

The first 15 residues, 1 to 15 (MKWLLLLGLLALSEC), serve as a signal peptide directing secretion. Residues 16–59 (IIHKVPLVRKKSLRKNLIEKGLLKDYLKTHTPNLATKYLPKAAF) constitute a propeptide, activation peptide. The Peptidase A1 domain occupies 75–384 (YFGTIGIGTP…DRANNQLGLA (310 aa)). Residue aspartate 93 is part of the active site. Disulfide bonds link cysteine 106/cysteine 111 and cysteine 267/cysteine 271. Aspartate 276 is a catalytic residue. Cysteine 310 and cysteine 343 are joined by a disulfide.

This sequence belongs to the peptidase A1 family.

The protein resides in the secreted. It carries out the reaction Preferential cleavage: hydrophobic, preferably aromatic, residues in P1 and P1' positions. Cleaves 1-Phe-|-Val-2, 4-Gln-|-His-5, 13-Glu-|-Ala-14, 14-Ala-|-Leu-15, 15-Leu-|-Tyr-16, 16-Tyr-|-Leu-17, 23-Gly-|-Phe-24, 24-Phe-|-Phe-25 and 25-Phe-|-Tyr-26 bonds in the B chain of insulin.. Functionally, shows particularly broad specificity; although bonds involving phenylalanine and leucine are preferred, many others are also cleaved to some extent. The chain is Pepsin-3 from Oryctolagus cuniculus (Rabbit).